A 782-amino-acid polypeptide reads, in one-letter code: Endonuclease MutS2 (782 aa).

Position 336–343 (336–343 (GPNTGGKT)) interacts with ATP. Positions 707-782 (LDLRGYRYED…GFGVTVATLK (76 aa)) constitute a Smr domain.

This sequence belongs to the DNA mismatch repair MutS family. MutS2 subfamily. As to quaternary structure, homodimer. Binds to stalled ribosomes, contacting rRNA.

Functionally, endonuclease that is involved in the suppression of homologous recombination and thus may have a key role in the control of bacterial genetic diversity. In terms of biological role, acts as a ribosome collision sensor, splitting the ribosome into its 2 subunits. Detects stalled/collided 70S ribosomes which it binds and splits by an ATP-hydrolysis driven conformational change. Acts upstream of the ribosome quality control system (RQC), a ribosome-associated complex that mediates the extraction of incompletely synthesized nascent chains from stalled ribosomes and their subsequent degradation. Probably generates substrates for RQC. The sequence is that of Endonuclease MutS2 from Staphylococcus aureus (strain JH1).